A 345-amino-acid polypeptide reads, in one-letter code: tRNA dimethylallyltransferase (345 aa).

9–16 (GPTASGKS) provides a ligand contact to ATP. Residue 11–16 (TASGKS) participates in substrate binding. Interaction with substrate tRNA stretches follow at residues 34 to 37 (DSMQ) and 195 to 199 (QRMIR).

It belongs to the IPP transferase family. As to quaternary structure, monomer. Requires Mg(2+) as cofactor.

The catalysed reaction is adenosine(37) in tRNA + dimethylallyl diphosphate = N(6)-dimethylallyladenosine(37) in tRNA + diphosphate. Catalyzes the transfer of a dimethylallyl group onto the adenine at position 37 in tRNAs that read codons beginning with uridine, leading to the formation of N6-(dimethylallyl)adenosine (i(6)A). The protein is tRNA dimethylallyltransferase of Orientia tsutsugamushi (strain Ikeda) (Rickettsia tsutsugamushi).